The following is a 396-amino-acid chain: Elongation factor Tu (396 aa).

One can recognise a tr-type G domain in the interval 10–206; sequence KPHVNIGTIG…AVDAYIPEPE (197 aa). Residues 19 to 26 form a G1 region; the sequence is GHVDHGKT. GTP is bound at residue 19 to 26; sequence GHVDHGKT. Residue Thr26 participates in Mg(2+) binding. The segment at 60 to 64 is G2; the sequence is GITIS. The segment at 81–84 is G3; that stretch reads DCPG. GTP contacts are provided by residues 81–85 and 136–139; these read DCPGH and NKVD. Residues 136–139 are G4; the sequence is NKVD. The segment at 174 to 176 is G5; the sequence is SAL.

Belongs to the TRAFAC class translation factor GTPase superfamily. Classic translation factor GTPase family. EF-Tu/EF-1A subfamily. In terms of assembly, monomer.

The protein resides in the cytoplasm. It catalyses the reaction GTP + H2O = GDP + phosphate + H(+). GTP hydrolase that promotes the GTP-dependent binding of aminoacyl-tRNA to the A-site of ribosomes during protein biosynthesis. This Magnetococcus marinus (strain ATCC BAA-1437 / JCM 17883 / MC-1) protein is Elongation factor Tu.